The chain runs to 877 residues: Alanine--tRNA ligase (877 aa).

4 residues coordinate Zn(2+): His-563, His-567, Cys-665, and His-669.

The protein belongs to the class-II aminoacyl-tRNA synthetase family. It depends on Zn(2+) as a cofactor.

Its subcellular location is the cytoplasm. The catalysed reaction is tRNA(Ala) + L-alanine + ATP = L-alanyl-tRNA(Ala) + AMP + diphosphate. Its function is as follows. Catalyzes the attachment of alanine to tRNA(Ala) in a two-step reaction: alanine is first activated by ATP to form Ala-AMP and then transferred to the acceptor end of tRNA(Ala). Also edits incorrectly charged Ser-tRNA(Ala) and Gly-tRNA(Ala) via its editing domain. This is Alanine--tRNA ligase from Thermoanaerobacter pseudethanolicus (strain ATCC 33223 / 39E) (Clostridium thermohydrosulfuricum).